The primary structure comprises 314 residues: tRNA dimethylallyltransferase (314 aa).

10–17 (GPTAVGKT) serves as a coordination point for ATP. Residue 12–17 (TAVGKT) coordinates substrate. Interaction with substrate tRNA regions lie at residues 35 to 38 (DSMQ), 160 to 164 (RRVIR), 239 to 244 (QAIGYK), and 272 to 279 (KRQLTWFR).

The protein belongs to the IPP transferase family. As to quaternary structure, monomer. It depends on Mg(2+) as a cofactor.

The enzyme catalyses adenosine(37) in tRNA + dimethylallyl diphosphate = N(6)-dimethylallyladenosine(37) in tRNA + diphosphate. Its function is as follows. Catalyzes the transfer of a dimethylallyl group onto the adenine at position 37 in tRNAs that read codons beginning with uridine, leading to the formation of N6-(dimethylallyl)adenosine (i(6)A). This chain is tRNA dimethylallyltransferase (miaA), found in Halalkalibacterium halodurans (strain ATCC BAA-125 / DSM 18197 / FERM 7344 / JCM 9153 / C-125) (Bacillus halodurans).